Here is a 421-residue protein sequence, read N- to C-terminus: Testin (421 aa).

A PET domain is found at 92 to 199 (MILTNPVAAK…GDVKLPCEMD (108 aa)). Residues 133 to 164 (EKQPVAGSEGAQYRKKQLAKQLPAHDQDPSKC) are disordered. The span at 155 to 164 (PAHDQDPSKC) shows a compositional bias: basic and acidic residues. LIM zinc-binding domains lie at 234–297 (YFCY…CDSE), 299–359 (PRCA…NHAV), and 362–421 (QGCH…KMMS).

The protein belongs to the prickle / espinas / testin family. As to quaternary structure, interacts via LIM domain 1 with ZYX. Interacts (via LIM domain 3) with ENAH and VASP. Interacts with ALKBH4, talin, actin, alpha-actinin, GRIP1 and PXN. Interacts (via LIM domain 2) with ACTL7A (via N-terminus). Heterodimer with ACTL7A; the heterodimer interacts with ENAH to form a heterotrimer.

It localises to the cytoplasm. The protein localises to the cell junction. The protein resides in the focal adhesion. Scaffold protein that may play a role in cell adhesion, cell spreading and in the reorganization of the actin cytoskeleton. Plays a role in the regulation of cell proliferation. May act as a tumor suppressor. The chain is Testin (TES) from Plecturocebus moloch (Dusky titi monkey).